The primary structure comprises 918 residues: Isoleucine--tRNA ligase (918 aa).

A 'HIGH' region motif is present at residues 57-67 (PYANGHIHIGH). Residue glutamate 564 coordinates L-isoleucyl-5'-AMP. The short motif at 605–609 (KMSKS) is the 'KMSKS' region element. Lysine 608 serves as a coordination point for ATP. Residues cysteine 888, cysteine 891, cysteine 903, and cysteine 906 each coordinate Zn(2+).

The protein belongs to the class-I aminoacyl-tRNA synthetase family. IleS type 1 subfamily. In terms of assembly, monomer. Requires Zn(2+) as cofactor.

The protein localises to the cytoplasm. The catalysed reaction is tRNA(Ile) + L-isoleucine + ATP = L-isoleucyl-tRNA(Ile) + AMP + diphosphate. Functionally, catalyzes the attachment of isoleucine to tRNA(Ile). As IleRS can inadvertently accommodate and process structurally similar amino acids such as valine, to avoid such errors it has two additional distinct tRNA(Ile)-dependent editing activities. One activity is designated as 'pretransfer' editing and involves the hydrolysis of activated Val-AMP. The other activity is designated 'posttransfer' editing and involves deacylation of mischarged Val-tRNA(Ile). In Nitratiruptor sp. (strain SB155-2), this protein is Isoleucine--tRNA ligase.